We begin with the raw amino-acid sequence, 313 residues long: Homoserine O-succinyltransferase (313 aa).

Residue cysteine 142 is the Acyl-thioester intermediate of the active site. The substrate site is built by lysine 163 and serine 192. The active-site Proton acceptor is histidine 235. Residue glutamate 237 is part of the active site. A substrate-binding site is contributed by arginine 249.

The protein belongs to the MetA family.

The protein resides in the cytoplasm. The catalysed reaction is L-homoserine + succinyl-CoA = O-succinyl-L-homoserine + CoA. Its pathway is amino-acid biosynthesis; L-methionine biosynthesis via de novo pathway; O-succinyl-L-homoserine from L-homoserine: step 1/1. Transfers a succinyl group from succinyl-CoA to L-homoserine, forming succinyl-L-homoserine. The polypeptide is Homoserine O-succinyltransferase (Vibrio vulnificus (strain CMCP6)).